The following is a 161-amino-acid chain: Abscisic acid receptor PYL11 (161 aa).

Residues 3–154 (TSQKYHTCGS…NLKSLAKLSE (152 aa)) form an START-like region. Residues K39, 68–73 (AEFSRE), 95–101 (RLVNYRS), and E119 each bind abscisate. The Gate loop signature appears at 64-68 (SGLPA). The short motif at 94–96 (HRL) is the Latch loop element.

It belongs to the PYR/PYL/RCAR abscisic acid intracellular receptor family. In terms of assembly, homodimer. Binds ABA on one subunit only. Interacts with PP2Cs. Binds to CARs protein in an ABA-independent manner, both at the plasma membrane and in the nucleus. Interacts with I-2 and TOPP1.

The protein resides in the cytoplasm. The protein localises to the nucleus. It localises to the cell membrane. Receptor for abscisic acid (ABA) required for ABA-mediated responses such as stomatal closure and germination inhibition. Inhibits the activity of group-A protein phosphatases type 2C (PP2Cs) when activated by ABA. Suppresses the phosphatase activity of TOPP1 in a dose-dependent manner in vitro. In Arabidopsis thaliana (Mouse-ear cress), this protein is Abscisic acid receptor PYL11 (PYL11).